The following is a 184-amino-acid chain: Peptide deformylase (184 aa).

Fe cation-binding residues include Cys-111 and His-154. The active site involves Glu-155. Position 158 (His-158) interacts with Fe cation.

This sequence belongs to the polypeptide deformylase family. Fe(2+) is required as a cofactor.

The catalysed reaction is N-terminal N-formyl-L-methionyl-[peptide] + H2O = N-terminal L-methionyl-[peptide] + formate. Its function is as follows. Removes the formyl group from the N-terminal Met of newly synthesized proteins. Requires at least a dipeptide for an efficient rate of reaction. N-terminal L-methionine is a prerequisite for activity but the enzyme has broad specificity at other positions. This chain is Peptide deformylase, found in Pediococcus pentosaceus (strain ATCC 25745 / CCUG 21536 / LMG 10740 / 183-1w).